We begin with the raw amino-acid sequence, 329 residues long: MKFSISSLKQVQPILCFKNKLSKVNVNSFLHPKEKVIFVMGATGSGKSRLAIDLATRFQGEIINSDKIQLYKGLDVLTNKVTPKECRGVPHHLLGVFDSEAGNLTATQYSRLASQAISKLSANNKLPIVAGGSNSYIEALVNHSSGFLLNNYDCCFIWVDVSLPVLNSFVSKRVDRMMEAGLLEEVREVFNPKANYSVGIRRAIGVPELHEYLRNESLVDRATKSKMLDVAVKNIKKNTEILACRQLKKIQRLHKKWKMSMHRVDATEVFLKRNVEEQDEAWENLVARPSERIVDKFYNNNNQLKNDDVEHCLAASYGGGSGSRAHNMI.

A mitochondrion-targeting transit peptide spans 1-40 (MKFSISSLKQVQPILCFKNKLSKVNVNSFLHPKEKVIFVM). Residue 41 to 48 (GATGSGKS) participates in ATP binding.

The protein belongs to the IPP transferase family. In terms of tissue distribution, expressed in both the vascular stele and the phloem companion cells of the root, in endodermis of the root elongation zone, trichomes on young leaves, and some pollen tubes.

It is found in the mitochondrion. The enzyme catalyses dimethylallyl diphosphate + ADP = N(6)-(dimethylallyl)adenosine 5'-diphosphate + diphosphate. It catalyses the reaction dimethylallyl diphosphate + ATP = N(6)-(dimethylallyl)adenosine 5'-triphosphate + diphosphate. In terms of biological role, involved in cytokinin biosynthesis. Catalyzes the transfer of an isopentenyl group from dimethylallyl diphosphate (DMAPP) to ATP and ADP. The polypeptide is Adenylate isopentenyltransferase 7, mitochondrial (IPT7) (Arabidopsis thaliana (Mouse-ear cress)).